Reading from the N-terminus, the 552-residue chain is Nucleolar complex protein 4 (552 aa).

The protein belongs to the CBF/MAK21 family. In terms of assembly, interacts with NOP14 and MPP10. Interacts with snoRNA U3. Component of the ribosomal small subunit (SSU) processome composed of at least 40 protein subunits and snoRNA U3.

Its subcellular location is the nucleus. The protein localises to the nucleolus. In terms of biological role, involved in nucleolar processing of pre-18S ribosomal RNA and ribosome assembly. Has a role in the nuclear export of 40S pre-ribosomal subunit to the cytoplasm. Its subcellular location and association with pre-40S subunit are unaffected by RPS19 disruptions, suggesting it acts before the ribosomal protein. This is Nucleolar complex protein 4 (NOC4) from Saccharomyces cerevisiae (strain ATCC 204508 / S288c) (Baker's yeast).